A 385-amino-acid polypeptide reads, in one-letter code: Leucine aminopeptidase 1 (385 aa).

A signal peptide spans 1–14; the sequence is MKFLTLALSATATA. Residues 15-85 constitute a propeptide that is removed on maturation; sequence MIIVNPEQQP…YGTLHTTRVV (71 aa). Residues H185, D204, E243, and D270 each contribute to the Zn(2+) site. C319 and C323 are oxidised to a cystine. H352 serves as a coordination point for Zn(2+).

It belongs to the peptidase M28 family. M28E subfamily. As to quaternary structure, monomer. Requires Zn(2+) as cofactor.

It is found in the secreted. Its function is as follows. Extracellular aminopeptidase that allows assimilation of proteinaceous substrates. This Penicillium rubens (strain ATCC 28089 / DSM 1075 / NRRL 1951 / Wisconsin 54-1255) (Penicillium chrysogenum) protein is Leucine aminopeptidase 1 (lap1).